A 250-amino-acid polypeptide reads, in one-letter code: Probable septum site-determining protein MinC (250 aa).

Residues 110 to 143 form a disordered region; that stretch reads SGARERPLEPEPEVVKKPEPAPAPPPPPEPEVRP. A compositionally biased stretch (basic and acidic residues) spans 112-128; that stretch reads ARERPLEPEPEVVKKPE. A compositionally biased stretch (pro residues) spans 129 to 138; it reads PAPAPPPPPE.

The protein belongs to the MinC family. As to quaternary structure, interacts with MinD and FtsZ.

Cell division inhibitor that blocks the formation of polar Z ring septums. Rapidly oscillates between the poles of the cell to destabilize FtsZ filaments that have formed before they mature into polar Z rings. Prevents FtsZ polymerization. In Pseudomonas putida (strain ATCC 47054 / DSM 6125 / CFBP 8728 / NCIMB 11950 / KT2440), this protein is Probable septum site-determining protein MinC.